The following is a 252-amino-acid chain: Phosphate import ATP-binding protein PstB (252 aa).

Residues 5 to 247 (LIASDVNIFY…PRDERTEAYV (243 aa)) form the ABC transporter domain. ATP is bound at residue 37–44 (GPSGCGKT).

This sequence belongs to the ABC transporter superfamily. Phosphate importer (TC 3.A.1.7) family. In terms of assembly, the complex is composed of two ATP-binding proteins (PstB), two transmembrane proteins (PstC and PstA) and a solute-binding protein (PstS).

Its subcellular location is the cell membrane. The enzyme catalyses phosphate(out) + ATP + H2O = ADP + 2 phosphate(in) + H(+). Its function is as follows. Part of the ABC transporter complex PstSACB involved in phosphate import. Responsible for energy coupling to the transport system. The chain is Phosphate import ATP-binding protein PstB from Deinococcus geothermalis (strain DSM 11300 / CIP 105573 / AG-3a).